The primary structure comprises 373 residues: tRNA pseudouridine synthase Pus10 (373 aa).

The active-site Nucleophile is aspartate 197. Residues tyrosine 265 and tyrosine 336 each contribute to the substrate site.

The protein belongs to the pseudouridine synthase Pus10 family.

The enzyme catalyses uridine(54) in tRNA = pseudouridine(54) in tRNA. It catalyses the reaction uridine(55) in tRNA = pseudouridine(55) in tRNA. In terms of biological role, responsible for synthesis of pseudouridine from uracil-54 and uracil-55 in the psi GC loop of transfer RNAs. This Korarchaeum cryptofilum (strain OPF8) protein is tRNA pseudouridine synthase Pus10.